The sequence spans 115 residues: uncharacterized protein (115 aa).

3 helical membrane passes run 7–27 (TLIF…IWFD), 40–60 (YALT…LLAA), and 72–92 (IVLV…YFYL).

Its subcellular location is the cell membrane. This is an uncharacterized protein from Haemophilus influenzae (strain ATCC 51907 / DSM 11121 / KW20 / Rd).